A 264-amino-acid chain; its full sequence is Glycosylphosphatidylinositol anchor biosynthesis protein 11 (264 aa).

The segment at 1-45 (MPLVDPVTMSTPSTPAKAMGKSLPNTVKDPSPPPKAGSHTRSPVE) is disordered. 6 helical membrane passes run 49–69 (NSYY…VLLW), 83–103 (LILP…LPVA), 132–152 (LLSL…MVLF), 160–180 (APHT…PLFY), 202–222 (SVGG…PIPL), and 233–253 (VTVL…GRTL).

Belongs to the PIGF family.

It is found in the endoplasmic reticulum membrane. It functions in the pathway glycolipid biosynthesis; glycosylphosphatidylinositol-anchor biosynthesis. Its function is as follows. Acts in the GPI biosynthetic pathway between GlcNAc-PI synthesis and GPI transfer to protein. This chain is Glycosylphosphatidylinositol anchor biosynthesis protein 11 (GPI11), found in Pyricularia oryzae (strain 70-15 / ATCC MYA-4617 / FGSC 8958) (Rice blast fungus).